Consider the following 481-residue polypeptide: Phosphoglucosamine mutase (481 aa).

The active-site Phosphoserine intermediate is the Ser128. Positions 128, 269, 271, and 273 each coordinate Mg(2+). Ser128 carries the phosphoserine modification.

It belongs to the phosphohexose mutase family. The cofactor is Mg(2+). Post-translationally, activated by phosphorylation.

The enzyme catalyses alpha-D-glucosamine 1-phosphate = D-glucosamine 6-phosphate. Catalyzes the conversion of glucosamine-6-phosphate to glucosamine-1-phosphate. The chain is Phosphoglucosamine mutase from Synechocystis sp. (strain ATCC 27184 / PCC 6803 / Kazusa).